The following is a 279-amino-acid chain: HTH-type transcriptional regulator HdfR (279 aa).

The region spanning 1–58 (MDTELLKTFLEVSRTRHFGRAAESLYLTQSAVSFRIRQLENQLGVNLFTRHRNNIRLT) is the HTH lysR-type domain. Positions 18-37 (FGRAAESLYLTQSAVSFRIR) form a DNA-binding region, H-T-H motif.

This sequence belongs to the LysR transcriptional regulatory family.

Negatively regulates the transcription of the flagellar master operon flhDC by binding to the upstream region of the operon. The polypeptide is HTH-type transcriptional regulator HdfR (Shigella boydii serotype 18 (strain CDC 3083-94 / BS512)).